A 310-amino-acid polypeptide reads, in one-letter code: uncharacterized protein (310 aa).

Positions 1–70 are disordered; it reads MAGNSQRRGA…ARGRTDETET (70 aa). The segment covering 49 to 62 has biased composition (basic residues); it reads AAKRAKAQQRRPAR. Residues Gly-262, Val-282, and Leu-291 each contribute to the S-adenosyl-L-methionine site.

This sequence belongs to the class IV-like SAM-binding methyltransferase superfamily. RNA methyltransferase TrmH family.

This is an uncharacterized protein from Mycobacterium marinum (strain ATCC BAA-535 / M).